We begin with the raw amino-acid sequence, 273 residues long: 5-deoxy-glucuronate isomerase (273 aa).

The protein belongs to the isomerase IolB family.

It catalyses the reaction 5-deoxy-D-glucuronate = 5-dehydro-2-deoxy-D-gluconate. Its pathway is polyol metabolism; myo-inositol degradation into acetyl-CoA; acetyl-CoA from myo-inositol: step 4/7. In terms of biological role, involved in the isomerization of 5-deoxy-glucuronate (5DG) to 5-dehydro-2-deoxy-D-gluconate (DKG or 2-deoxy-5-keto-D-gluconate). In Listeria monocytogenes serovar 1/2a (strain ATCC BAA-679 / EGD-e), this protein is 5-deoxy-glucuronate isomerase.